The chain runs to 172 residues: Crossover junction endodeoxyribonuclease RuvC (172 aa).

Catalysis depends on residues aspartate 12, glutamate 71, and aspartate 143. Mg(2+) is bound by residues aspartate 12, glutamate 71, and aspartate 143.

The protein belongs to the RuvC family. In terms of assembly, homodimer which binds Holliday junction (HJ) DNA. The HJ becomes 2-fold symmetrical on binding to RuvC with unstacked arms; it has a different conformation from HJ DNA in complex with RuvA. In the full resolvosome a probable DNA-RuvA(4)-RuvB(12)-RuvC(2) complex forms which resolves the HJ. Requires Mg(2+) as cofactor.

It localises to the cytoplasm. It carries out the reaction Endonucleolytic cleavage at a junction such as a reciprocal single-stranded crossover between two homologous DNA duplexes (Holliday junction).. Functionally, the RuvA-RuvB-RuvC complex processes Holliday junction (HJ) DNA during genetic recombination and DNA repair. Endonuclease that resolves HJ intermediates. Cleaves cruciform DNA by making single-stranded nicks across the HJ at symmetrical positions within the homologous arms, yielding a 5'-phosphate and a 3'-hydroxyl group; requires a central core of homology in the junction. The consensus cleavage sequence is 5'-(A/T)TT(C/G)-3'. Cleavage occurs on the 3'-side of the TT dinucleotide at the point of strand exchange. HJ branch migration catalyzed by RuvA-RuvB allows RuvC to scan DNA until it finds its consensus sequence, where it cleaves and resolves the cruciform DNA. The chain is Crossover junction endodeoxyribonuclease RuvC from Coxiella burnetii (strain CbuG_Q212) (Coxiella burnetii (strain Q212)).